We begin with the raw amino-acid sequence, 588 residues long: Proteasome-associated ATPase (588 aa).

A compositionally biased stretch (basic and acidic residues) spans 1–10 (MAAHDDDINR). Residues 1 to 22 (MAAHDDDINRGTRPARGSEDPA) form a disordered region. Residues 47-94 (RILEERIVELQTNLAGVSAQNERLANTLREARDQIVALKEEVDRLAQP) adopt a coiled-coil conformation. 276 to 281 (GCGKTL) serves as a coordination point for ATP. A docks into pockets in the proteasome alpha-ring region spans residues 587-588 (YL).

Belongs to the AAA ATPase family. As to quaternary structure, homohexamer. Assembles into a hexameric ring structure that caps the 20S proteasome core. Strongly interacts with the prokaryotic ubiquitin-like protein Pup through a hydrophobic interface; the interacting region of ARC lies in its N-terminal coiled-coil domain. There is one Pup binding site per ARC hexamer ring. Upon ATP-binding, the C-terminus of ARC interacts with the alpha-rings of the proteasome core, possibly by binding to the intersubunit pockets.

Its pathway is protein degradation; proteasomal Pup-dependent pathway. In terms of biological role, ATPase which is responsible for recognizing, binding, unfolding and translocation of pupylated proteins into the bacterial 20S proteasome core particle. May be essential for opening the gate of the 20S proteasome via an interaction with its C-terminus, thereby allowing substrate entry and access to the site of proteolysis. Thus, the C-termini of the proteasomal ATPase may function like a 'key in a lock' to induce gate opening and therefore regulate proteolysis. This is Proteasome-associated ATPase from Streptomyces griseus subsp. griseus (strain JCM 4626 / CBS 651.72 / NBRC 13350 / KCC S-0626 / ISP 5235).